The sequence spans 145 residues: Endoribonuclease YbeY (145 aa).

Zn(2+)-binding residues include His-109, His-113, and His-119.

It belongs to the endoribonuclease YbeY family. The cofactor is Zn(2+).

It localises to the cytoplasm. Its function is as follows. Single strand-specific metallo-endoribonuclease involved in late-stage 70S ribosome quality control and in maturation of the 3' terminus of the 16S rRNA. The chain is Endoribonuclease YbeY from Vesicomyosocius okutanii subsp. Calyptogena okutanii (strain HA).